The chain runs to 224 residues: Pyridoxal 5'-phosphate synthase subunit PdxT (224 aa).

55-57 (GES) contacts L-glutamine. Cys-87 acts as the Nucleophile in catalysis. Residues Arg-113 and 142-143 (IR) contribute to the L-glutamine site. Residues His-178 and Glu-180 each act as charge relay system in the active site.

This sequence belongs to the glutaminase PdxT/SNO family. In terms of assembly, in the presence of PdxS, forms a dodecamer of heterodimers. Only shows activity in the heterodimer.

It catalyses the reaction aldehydo-D-ribose 5-phosphate + D-glyceraldehyde 3-phosphate + L-glutamine = pyridoxal 5'-phosphate + L-glutamate + phosphate + 3 H2O + H(+). It carries out the reaction L-glutamine + H2O = L-glutamate + NH4(+). It functions in the pathway cofactor biosynthesis; pyridoxal 5'-phosphate biosynthesis. Its function is as follows. Catalyzes the hydrolysis of glutamine to glutamate and ammonia as part of the biosynthesis of pyridoxal 5'-phosphate. The resulting ammonia molecule is channeled to the active site of PdxS. The sequence is that of Pyridoxal 5'-phosphate synthase subunit PdxT from Syntrophus aciditrophicus (strain SB).